A 1345-amino-acid chain; its full sequence is DNA-directed RNA polymerase subunit beta (1345 aa).

It belongs to the RNA polymerase beta chain family. As to quaternary structure, the RNAP catalytic core consists of 2 alpha, 1 beta, 1 beta' and 1 omega subunit. When a sigma factor is associated with the core the holoenzyme is formed, which can initiate transcription.

The enzyme catalyses RNA(n) + a ribonucleoside 5'-triphosphate = RNA(n+1) + diphosphate. Functionally, DNA-dependent RNA polymerase catalyzes the transcription of DNA into RNA using the four ribonucleoside triphosphates as substrates. In Shewanella sp. (strain MR-4), this protein is DNA-directed RNA polymerase subunit beta.